The sequence spans 102 residues: uncharacterized protein (102 aa).

2 consecutive transmembrane segments (helical) span residues Phe-38 to Leu-58 and Val-64 to Phe-84.

Its subcellular location is the membrane. This is an uncharacterized protein from Saccharomyces cerevisiae (strain ATCC 204508 / S288c) (Baker's yeast).